Consider the following 354-residue polypeptide: Methionine import ATP-binding protein MetN (354 aa).

The region spanning 8–250 is the ABC transporter domain; that stretch reads LDHIDITFHQ…PREDLTKDFI (243 aa). 42–49 is an ATP binding site; it reads GYSGAGKS.

Belongs to the ABC transporter superfamily. Methionine importer (TC 3.A.1.24) family. The complex is composed of two ATP-binding proteins (MetN), two transmembrane proteins (MetI) and a solute-binding protein (MetQ).

The protein resides in the cell membrane. It carries out the reaction L-methionine(out) + ATP + H2O = L-methionine(in) + ADP + phosphate + H(+). The catalysed reaction is D-methionine(out) + ATP + H2O = D-methionine(in) + ADP + phosphate + H(+). In terms of biological role, part of the ABC transporter complex MetNIQ involved in methionine import. Responsible for energy coupling to the transport system. The polypeptide is Methionine import ATP-binding protein MetN (Streptococcus mutans serotype c (strain ATCC 700610 / UA159)).